The primary structure comprises 116 residues: Mitochondrial import inner membrane translocase subunit PAM16 like 2 (116 aa).

A mitochondrion-targeting transit peptide spans 1 to 27 (MAGRLLANLIVMGSGIIGRAVFQAYRQ). Residues 57-106 (EARQILGVTEKTSWEEILQKYDKLFENNAKAGSFYLQSKVHRAKECLEVV) form a J-like region.

The protein belongs to the TIM16/PAM16 family. Expressed constitutively and ubiquitously, except in root tips, at low levels.

The protein resides in the mitochondrion inner membrane. It localises to the cytoplasm. Functionally, regulates ATP-dependent protein translocation into the mitochondrial matrix. Involved in the uptake of thaxtomin, a phytotoxin produced by Streptomyces bacteria, that causes dramatic cell swelling, reduced seedling growth, and inhibition of cellulose synthesis. Modulates polar auxin transport. Involved in importing a negative regulator of plant immunity into mitochondria, thus protecting plants from over-accumulation of reactive oxygen species (ROS) and preventing autoimmunity. Confers sensitivity to virulent pathogens such as the oomycete H.arabidopsidis Noco2 and the bacteria P.syringae pv. maculicola ES4326. The chain is Mitochondrial import inner membrane translocase subunit PAM16 like 2 from Arabidopsis thaliana (Mouse-ear cress).